The sequence spans 490 residues: GTPase Der (490 aa).

EngA-type G domains are found at residues 3 to 166 and 203 to 376; these read PVVA…MDDV and IKLA…DSST. GTP-binding positions include 9–16, 56–60, 118–121, 209–216, 256–260, and 321–324; these read GRPNVGKS, DTGGI, NKTD, DTAGV, and NKWD. Residues 377 to 461 form the KH-like domain; that stretch reads RRVSTAMLTR…PIRIQFKEGE (85 aa).

Belongs to the TRAFAC class TrmE-Era-EngA-EngB-Septin-like GTPase superfamily. EngA (Der) GTPase family. As to quaternary structure, associates with the 50S ribosomal subunit.

In terms of biological role, GTPase that plays an essential role in the late steps of ribosome biogenesis. The sequence is that of GTPase Der from Salmonella gallinarum (strain 287/91 / NCTC 13346).